We begin with the raw amino-acid sequence, 451 residues long: tRNA-2-methylthio-N(6)-dimethylallyladenosine synthase (451 aa).

Residues 3-120 enclose the MTTase N-terminal domain; the sequence is LKLHIKTYGC…LPEMINHVRI (118 aa). 6 residues coordinate [4Fe-4S] cluster: C12, C49, C83, C157, C161, and C164. The 233-residue stretch at 143–375 folds into the Radical SAM core domain; that stretch reads QAKGPTAFVS…QECIRKQAMK (233 aa). The TRAM domain maps to 378-441; it reads QAMKGTVQCI…SNSLRGELIS (64 aa).

It belongs to the methylthiotransferase family. MiaB subfamily. In terms of assembly, monomer. It depends on [4Fe-4S] cluster as a cofactor.

The protein localises to the cytoplasm. It catalyses the reaction N(6)-dimethylallyladenosine(37) in tRNA + (sulfur carrier)-SH + AH2 + 2 S-adenosyl-L-methionine = 2-methylsulfanyl-N(6)-dimethylallyladenosine(37) in tRNA + (sulfur carrier)-H + 5'-deoxyadenosine + L-methionine + A + S-adenosyl-L-homocysteine + 2 H(+). Catalyzes the methylthiolation of N6-(dimethylallyl)adenosine (i(6)A), leading to the formation of 2-methylthio-N6-(dimethylallyl)adenosine (ms(2)i(6)A) at position 37 in tRNAs that read codons beginning with uridine. In Baumannia cicadellinicola subsp. Homalodisca coagulata, this protein is tRNA-2-methylthio-N(6)-dimethylallyladenosine synthase.